The sequence spans 278 residues: MDKSGIDSLDHVTSDAVELANRSDNSSDSSLFKTQCIPYSPKGEKRNPIRKFVRTPESVHASDSSSDSSFEPIPLTIKAIFERFKNRKKRYKKKKKRRYQPTGRPRGRPEGRRNPIYSLIDKKKQFRSRGSGFPFLESENEKNAPWRKILTFEQAVARGFFNYIEKLKYEHHLKESLKQMNVGEDLENEDFDSRRYKFLDDDGSISPIEESTAEDEDATHLEDNECDIKLAGDSFIVSSEFPVRLSVYLEEEDITEEAALSKKRATKAKNTGQRGLKM.

2 disordered regions span residues 20-71 and 88-116; these read ANRS…SSFE and KKRY…RNPI. Over residues 22-33 the composition is skewed to polar residues; sequence RSDNSSDSSLFK. Ser-23 carries the post-translational modification Phosphoserine. The span at 88–99 shows a compositional bias: basic residues; the sequence is KKRYKKKKKRRY. Phosphoserine is present on residues Ser-138 and Ser-234.

In terms of assembly, component of the transcription factor SL1/TIF-IB complex, composed of TBP and at least TAF1A, TAF1B, TAF1C and TAF1D. Interacts with UBTF.

It localises to the nucleus. In terms of biological role, component of the transcription factor SL1/TIF-IB complex, which is involved in the assembly of the PIC (preinitiation complex) during RNA polymerase I-dependent transcription. The rate of PIC formation probably is primarily dependent on the rate of association of SL1/TIF-IB with the rDNA promoter. SL1/TIF-IB is involved in stabilization of nucleolar transcription factor 1/UBTF on rDNA. Formation of SL1/TIF-IB excludes the association of TBP with TFIID subunits. This Homo sapiens (Human) protein is TATA box-binding protein-associated factor RNA polymerase I subunit D (TAF1D).